Reading from the N-terminus, the 246-residue chain is ATP synthase subunit a, chloroplastic (246 aa).

Helical transmembrane passes span 35–55, 94–114, 132–152, 198–218, and 219–239; these read GQVL…GLIA, VPFI…GALL, DINT…YAGI, LVVG…VMLL, and GVFT…AYIG.

It belongs to the ATPase A chain family. As to quaternary structure, F-type ATPases have 2 components, CF(1) - the catalytic core - and CF(0) - the membrane proton channel. CF(1) has five subunits: alpha(3), beta(3), gamma(1), delta(1), epsilon(1). CF(0) has four main subunits: a, b, b' and c.

The protein localises to the plastid. Its subcellular location is the chloroplast thylakoid membrane. Functionally, key component of the proton channel; it plays a direct role in the translocation of protons across the membrane. This Stigeoclonium helveticum (Green alga) protein is ATP synthase subunit a, chloroplastic.